Consider the following 256-residue polypeptide: Phosphoribosylaminoimidazole-succinocarboxamide synthase (256 aa).

The protein belongs to the SAICAR synthetase family.

The catalysed reaction is 5-amino-1-(5-phospho-D-ribosyl)imidazole-4-carboxylate + L-aspartate + ATP = (2S)-2-[5-amino-1-(5-phospho-beta-D-ribosyl)imidazole-4-carboxamido]succinate + ADP + phosphate + 2 H(+). The protein operates within purine metabolism; IMP biosynthesis via de novo pathway; 5-amino-1-(5-phospho-D-ribosyl)imidazole-4-carboxamide from 5-amino-1-(5-phospho-D-ribosyl)imidazole-4-carboxylate: step 1/2. The chain is Phosphoribosylaminoimidazole-succinocarboxamide synthase from Synechococcus sp. (strain JA-3-3Ab) (Cyanobacteria bacterium Yellowstone A-Prime).